Here is a 360-residue protein sequence, read N- to C-terminus: Peptide chain release factor 1 (360 aa).

At Q235 the chain carries N5-methylglutamine.

This sequence belongs to the prokaryotic/mitochondrial release factor family. In terms of processing, methylated by PrmC. Methylation increases the termination efficiency of RF1.

The protein localises to the cytoplasm. Its function is as follows. Peptide chain release factor 1 directs the termination of translation in response to the peptide chain termination codons UAG and UAA. The sequence is that of Peptide chain release factor 1 from Burkholderia cenocepacia (strain ATCC BAA-245 / DSM 16553 / LMG 16656 / NCTC 13227 / J2315 / CF5610) (Burkholderia cepacia (strain J2315)).